We begin with the raw amino-acid sequence, 175 residues long: Adenine phosphoribosyltransferase (175 aa).

Belongs to the purine/pyrimidine phosphoribosyltransferase family. In terms of assembly, homodimer.

It localises to the cytoplasm. It catalyses the reaction AMP + diphosphate = 5-phospho-alpha-D-ribose 1-diphosphate + adenine. It participates in purine metabolism; AMP biosynthesis via salvage pathway; AMP from adenine: step 1/1. In terms of biological role, catalyzes a salvage reaction resulting in the formation of AMP, that is energically less costly than de novo synthesis. This chain is Adenine phosphoribosyltransferase, found in Synechococcus sp. (strain JA-2-3B'a(2-13)) (Cyanobacteria bacterium Yellowstone B-Prime).